We begin with the raw amino-acid sequence, 501 residues long: Aldehyde dehydrogenase, cytosolic 1 (501 aa).

Residue 246-251 (GSTEVG) participates in NAD(+) binding. The active-site Proton acceptor is Glu269. Cys303 functions as the Nucleophile in the catalytic mechanism.

The protein belongs to the aldehyde dehydrogenase family. In terms of assembly, homotetramer. In terms of tissue distribution, eye specific, with very high expression in the lens.

The protein resides in the cytoplasm. The catalysed reaction is an aldehyde + NAD(+) + H2O = a carboxylate + NADH + 2 H(+). The protein operates within alcohol metabolism; ethanol degradation; acetate from ethanol: step 2/2. Functionally, major component of the eye of elephant shrews, which in contrast to other mammals, possesses both a lens- and a non-lens class-1 aldehyde dehydrogenase 1. This eye-specific form is a structural protein of the lens and, in other part of the eye, serves as the major form of ALDH1. Can convert/oxidize retinaldehyde to retinoic acid. In Elephantulus edwardii (Cape long-eared elephant shrew), this protein is Aldehyde dehydrogenase, cytosolic 1 (ALDH1).